A 222-amino-acid polypeptide reads, in one-letter code: Putative germin-like protein 3-2 (222 aa).

A signal peptide spans 1–22; it reads MAKLILATFAVVFLALAATSLA. Residues cysteine 32 and cysteine 50 are joined by a disulfide bond. Asparagine 55 and asparagine 71 each carry an N-linked (GlcNAc...) asparagine glycan. The 149-residue stretch at 64–212 folds into the Cupin type-1 domain; sequence DGLTNAGNTT…AFQVDGGMVE (149 aa). 4 residues coordinate Mn(2+): histidine 112, histidine 114, glutamate 119, and histidine 158. Asparagine 165 carries an N-linked (GlcNAc...) asparagine glycan.

The protein belongs to the germin family. In terms of assembly, oligomer (believed to be a pentamer but probably hexamer).

Its subcellular location is the secreted. It localises to the extracellular space. The protein resides in the apoplast. In terms of biological role, may play a role in plant defense. Probably has no oxalate oxidase activity even if the active site is conserved. This chain is Putative germin-like protein 3-2, found in Oryza sativa subsp. japonica (Rice).